A 180-amino-acid polypeptide reads, in one-letter code: MSGLTIFSDQQPEKPLWQSHNAEEIQQQLTAIGVRFERWQADCELGENPQPEAVIAAYQHEIDRLVAENGYKSWDVISMRPDNPQREALREKFLSEHTHGEDEVRFFVEGSGLFCLHLNEKVYQILCEKNDLLSVPADIPHWFDMGSAPNFTAIRVFDNPEGWIARSTGDNIADGYPRLA.

4 residues coordinate Fe(2+): His97, His99, Glu103, and His141. Positions 97, 99, 103, and 141 each coordinate Ni(2+).

Belongs to the acireductone dioxygenase (ARD) family. In terms of assembly, monomer. Requires Fe(2+) as cofactor. The cofactor is Ni(2+).

It carries out the reaction 1,2-dihydroxy-5-(methylsulfanyl)pent-1-en-3-one + O2 = 3-(methylsulfanyl)propanoate + CO + formate + 2 H(+). The enzyme catalyses 1,2-dihydroxy-5-(methylsulfanyl)pent-1-en-3-one + O2 = 4-methylsulfanyl-2-oxobutanoate + formate + 2 H(+). Its pathway is amino-acid biosynthesis; L-methionine biosynthesis via salvage pathway; L-methionine from S-methyl-5-thio-alpha-D-ribose 1-phosphate: step 5/6. Functionally, catalyzes 2 different reactions between oxygen and the acireductone 1,2-dihydroxy-3-keto-5-methylthiopentene (DHK-MTPene) depending upon the metal bound in the active site. Fe-containing acireductone dioxygenase (Fe-ARD) produces formate and 2-keto-4-methylthiobutyrate (KMTB), the alpha-ketoacid precursor of methionine in the methionine recycle pathway. Ni-containing acireductone dioxygenase (Ni-ARD) produces methylthiopropionate, carbon monoxide and formate, and does not lie on the methionine recycle pathway. This is Acireductone dioxygenase from Yersinia pseudotuberculosis serotype O:1b (strain IP 31758).